The chain runs to 396 residues: MSSSPSPSPSSSSSSSASSSASSSPSSSSKLTWLDIRSVGEARAAIVQEALHHRVEALVADDPAHLADLPPTVAKVLLVVGKQIPEEFGEATVVVVDPSKHGVTPAELALKHPEIEFGRFVEIIDAPTLEDACESSRTEKWSVLLFRDPTKIPLEIVIAAAARASGSMVTIAQDLEEAEILFGVLEHGSDGVMMAPKTVGDAAELKRIAEAGIPNLNLTELRVVETSHIGMGERACVDTTTHFGEDEGILVGSHSKGMILCVSETHPLPYMPTRPFRVNAGAIHSYTLGRDERTNYLSELKTGSKLTAVDIKGNTRLVTVGRVKIETRPLISIDAEAPDGRRVNLILQDDWHVRVLGPGGTVLNSTELKPGDTVLGYLPVEDRHVGYPINEFCLEK.

The interval 1-29 (MSSSPSPSPSSSSSSSASSSASSSPSSSS) is disordered.

The protein belongs to the archaeal-type DHQ synthase family. GriH subfamily. Monomer. The cofactor is Mn(2+).

It catalyses the reaction 2-amino-4,5-dihydroxy-6-oxo-7-(phosphooxy)heptanoate = 3-amino-4-hydroxybenzoate + phosphate + 2 H2O + H(+). Its function is as follows. Catalyzes the cyclization of 2-amino-4,5-dihydroxy-6-one-heptanoic acid-7-phosphate to yield 3-amino-4-hydroxybenzoic acid (3,4-AHBA). The sequence is that of 3-amino-4-hydroxybenzoic acid synthase (griH) from Streptomyces griseus subsp. griseus (strain JCM 4626 / CBS 651.72 / NBRC 13350 / KCC S-0626 / ISP 5235).